Reading from the N-terminus, the 188-residue chain is Xanthine phosphoribosyltransferase (188 aa).

Xanthine is bound by residues leucine 20 and asparagine 27. A 5-phospho-alpha-D-ribose 1-diphosphate-binding site is contributed by 127 to 131 (AYGNA). Position 155 (lysine 155) interacts with xanthine.

The protein belongs to the purine/pyrimidine phosphoribosyltransferase family. Xpt subfamily. As to quaternary structure, homodimer.

The protein localises to the cytoplasm. The enzyme catalyses XMP + diphosphate = xanthine + 5-phospho-alpha-D-ribose 1-diphosphate. The protein operates within purine metabolism; XMP biosynthesis via salvage pathway; XMP from xanthine: step 1/1. Converts the preformed base xanthine, a product of nucleic acid breakdown, to xanthosine 5'-monophosphate (XMP), so it can be reused for RNA or DNA synthesis. This is Xanthine phosphoribosyltransferase from Parabacteroides distasonis (strain ATCC 8503 / DSM 20701 / CIP 104284 / JCM 5825 / NCTC 11152).